The primary structure comprises 261 residues: Probable 6-phosphogluconolactonase 4 (261 aa).

Belongs to the glucosamine/galactosamine-6-phosphate isomerase family. 6-phosphogluconolactonase subfamily.

The protein localises to the cytoplasm. It localises to the cytosol. It catalyses the reaction 6-phospho-D-glucono-1,5-lactone + H2O = 6-phospho-D-gluconate + H(+). It participates in carbohydrate degradation; pentose phosphate pathway; D-ribulose 5-phosphate from D-glucose 6-phosphate (oxidative stage): step 2/3. Functionally, catalyzes the hydrolysis of 6-phosphogluconolactone to 6-phosphogluconate. The sequence is that of Probable 6-phosphogluconolactonase 4 from Arabidopsis thaliana (Mouse-ear cress).